Here is a 110-residue protein sequence, read N- to C-terminus: Pathogenesis-related protein (110 aa).

An N-terminal signal peptide occupies residues 1-19; the sequence is AFLLAATLTISSHMQEAGA.

It belongs to the thaumatin family.

This chain is Pathogenesis-related protein, found in Juniperus virginiana (Eastern redcedar).